We begin with the raw amino-acid sequence, 285 residues long: HTH-type transcriptional regulator MurR (285 aa).

The 77-residue stretch at 1-77 folds into the HTH rpiR-type domain; the sequence is MLYLTKISNA…MALIGEYSAS (77 aa). The H-T-H motif DNA-binding region spans 37–56; that stretch reads SRQMAKQLGISQSSIVKFAQ. Positions 128 to 268 constitute an SIS domain; that stretch reads IIEVISKAPF…FVGLVQLNDV (141 aa).

As to quaternary structure, homotetramer.

Its pathway is amino-sugar metabolism; N-acetylmuramate degradation [regulation]. Represses the expression of the murPQ operon involved in the uptake and degradation of N-acetylmuramic acid (MurNAc). Binds to two adjacent inverted repeats within the operator region. MurNAc 6-phosphate, the substrate of MurQ, is the specific inducer that weakens binding of MurR to the operator. The sequence is that of HTH-type transcriptional regulator MurR from Escherichia coli O139:H28 (strain E24377A / ETEC).